The chain runs to 154 residues: Putative protein heh-1 (154 aa).

A signal peptide spans 1-15 (MKTVIFLALLGLAAA). Intrachain disulfides connect Cys39-Cys50 and Cys97-Cys103.

This sequence belongs to the NPC2 family.

The protein resides in the secreted. The polypeptide is Putative protein heh-1 (heh-1) (Caenorhabditis elegans).